The primary structure comprises 245 residues: Probable septum site-determining protein MinC (245 aa).

Basic and acidic residues predominate over residues 113–132; the sequence is RERPLEPLVGEEKKKPEKPP. The disordered stretch occupies residues 113–138; sequence RERPLEPLVGEEKKKPEKPPEPTIKP.

The protein belongs to the MinC family. In terms of assembly, interacts with MinD and FtsZ.

Its function is as follows. Cell division inhibitor that blocks the formation of polar Z ring septums. Rapidly oscillates between the poles of the cell to destabilize FtsZ filaments that have formed before they mature into polar Z rings. Prevents FtsZ polymerization. This is Probable septum site-determining protein MinC from Pseudomonas fluorescens (strain SBW25).